Reading from the N-terminus, the 556-residue chain is Outer spore wall assembly protein SHE10 (556 aa).

Positions 1-21 (MRFLTKFLLFLATVYFGLKYA) are cleaved as a signal peptide. Residues 135-201 (NKNLKRHVER…KQITSDVKKT (67 aa)) are a coiled coil. Positions 190 to 208 (EAKQITSDVKKTVESEIKK) are enriched in basic and acidic residues. Disordered stretches follow at residues 190–263 (EAKQ…EDIT) and 534–556 (RKEA…PISA). Residues 220–244 (IVSTSTIVKTITRTRHSSSSTTSTK) show a composition bias toward low complexity. The segment covering 245–256 (SAEETSEKNLET) has biased composition (basic and acidic residues). Residues 481–547 (KISEFKLLLD…GEVNESSEEE (67 aa)) adopt a coiled-coil conformation.

This sequence belongs to the SHE10 family. Component of the mitochondria-localized RNase mitochondrial RNA-processing (RNase MRP) composed of one single RNA encoded by the NME1 gene and at least 31 proteins. Absent in the nucleus-localized RNase MRP (NuMRP).

Its subcellular location is the mitochondrion. In terms of biological role, involved in spore wall assembly. May be a component of the mitochondrial RNase MRP (MtMRP), a ribonucleoprotein endoribonuclease involved in the cleaving RNA transcripts to generate primers for DNA replication in mitochondria. The protein is Outer spore wall assembly protein SHE10 of Candida glabrata (strain ATCC 2001 / BCRC 20586 / JCM 3761 / NBRC 0622 / NRRL Y-65 / CBS 138) (Yeast).